The chain runs to 118 residues: Large ribosomal subunit protein bL20 (118 aa).

The protein belongs to the bacterial ribosomal protein bL20 family.

Functionally, binds directly to 23S ribosomal RNA and is necessary for the in vitro assembly process of the 50S ribosomal subunit. It is not involved in the protein synthesizing functions of that subunit. This is Large ribosomal subunit protein bL20 from Aliarcobacter butzleri (strain RM4018) (Arcobacter butzleri).